A 441-amino-acid chain; its full sequence is tRNA modification GTPase MnmE (441 aa).

Residues R21, E79, and K118 each contribute to the (6S)-5-formyl-5,6,7,8-tetrahydrofolate site. In terms of domain architecture, TrmE-type G spans 214-370; it reads GFKIAIVGKP…LEGYLKTQDT (157 aa). GTP is bound by residues 224–229, 243–249, and 268–271; these read NVGKSS, SDEAGTT, and DTAG. Mg(2+) is bound by residues S228 and T249. A (6S)-5-formyl-5,6,7,8-tetrahydrofolate-binding site is contributed by K441.

This sequence belongs to the TRAFAC class TrmE-Era-EngA-EngB-Septin-like GTPase superfamily. TrmE GTPase family. Homodimer. Heterotetramer of two MnmE and two MnmG subunits. Requires K(+) as cofactor.

It is found in the cytoplasm. In terms of biological role, exhibits a very high intrinsic GTPase hydrolysis rate. Involved in the addition of a carboxymethylaminomethyl (cmnm) group at the wobble position (U34) of certain tRNAs, forming tRNA-cmnm(5)s(2)U34. The polypeptide is tRNA modification GTPase MnmE (Campylobacter concisus (strain 13826)).